Consider the following 740-residue polypeptide: DNA polymerase iota (740 aa).

A disordered region spans residues 1 to 21 (MEKLGVEPEEEGGGDDDEEDA). Acidic residues predominate over residues 7–21 (EPEEEGGGDDDEEDA). Residues 55–268 (IVHVDLDCFY…NHIKEIPGIG (214 aa)) form the UmuC domain. Positions 59 and 60 each coordinate Mg(2+). Residues D59 and L60 each contribute to the Mn(2+) site. 2 residues coordinate a 2'-deoxyribonucleoside 5'-triphosphate: Y64 and R96. D151 contributes to the Mg(2+) binding site. A Mn(2+)-binding site is contributed by D151. Residue E152 is the Proton acceptor of the active site. 2 DNA-binding regions span residues 249 to 314 (ESCQ…FGED) and 325 to 439 (QSFS…CNLK). The Ubiquitin-binding 1 (UBM1) motif lies at 527 to 544 (VDQEVFKQLPVDIQEEIL). 2 disordered regions span residues 581–615 (PINP…SSYM) and 671–704 (NHTT…KITF). Residues 605-615 (SGFNSSSSSYM) are compositionally biased toward low complexity. The segment covering 672–702 (HTTDSHKQTVATDSHEGLTENREPDSVDEKI) has biased composition (basic and acidic residues). Positions 708 to 725 (IDPQVFYELPEAVQKELL) match the Ubiquitin-binding 2 (UBM2) motif.

The protein belongs to the DNA polymerase type-Y family. Interacts with POLH. Interacts with REV1. Interacts with ubiquitin. The cofactor is Mg(2+). Mn(2+) is required as a cofactor. Post-translationally, monoubiquitinated. Protein monoubiquitination prevents POLI binding to ubiquitin via the ubiquitin-binding motif 1 and ubiquitin-binding motif 2. As to expression, ubiquitous. Highly expressed in testis.

It localises to the nucleus. The enzyme catalyses DNA(n) + a 2'-deoxyribonucleoside 5'-triphosphate = DNA(n+1) + diphosphate. Functionally, error-prone DNA polymerase specifically involved in DNA repair. Plays an important role in translesion synthesis, where the normal high-fidelity DNA polymerases cannot proceed and DNA synthesis stalls. Favors Hoogsteen base-pairing in the active site. Inserts the correct base with high-fidelity opposite an adenosine template. Exhibits low fidelity and efficiency opposite a thymidine template, where it will preferentially insert guanosine. May play a role in hypermutation of immunoglobulin genes. Forms a Schiff base with 5'-deoxyribose phosphate at abasic sites, but may not have lyase activity. The protein is DNA polymerase iota (POLI) of Homo sapiens (Human).